The primary structure comprises 1274 residues: MAPSKKAGKKGAVGGFLSGASKPQKVQKADWSEGFTKKKAAGVPDMTLLSTITNEAINDNLKVRFQNQEIYTYIAHVLISVNPFRDLGIYTNDVLNSYRGKNRLEMSPHVFAIAESAYYRMTTEKENQCVIISGESGAGKTEAAKRIMQYIAAVSGGAEGGGIEGIKEMVLATNPLLESFGCAKTLRNDNSSRHGKYLEIMFNGMGQPVGAQITNYLLEKNRVVGQIDDERDFHIFYQFTKGASAKMKEAFGLQGPEAYAYISRSGCLDVKSINDVSDFQETLRAMQVIGLTSDEQDSIFRILATILWLGNIDFVEGDDGNAAISDSGVADFAAYLLEVDSAQLQKVLLMRIMETQRGGRRGSVYEVPQNVAQASSGRDALAKALYNNLFEWIVSRVNISMKPQTPSQYVIGVLDIYGFEIFQDNSFEQLSINYVNEKLQQIFIELTLKAEQEEYVREQIKWTPIKFFDNSVVCSLIEDRRPAGIFATLNDATATAHADPSAADNSFIQRSSMLASNPNFEARGNKFLIKHYAGDVLYTVAGMTDKNKDTLIKDILDLIEGSKDPFLHTLFPDKVDHTSKKRPPTAGDKIKLSANLLVENLMNCQPHYIRTIKPNQHRSPTEYDDKAILHQIKYLGLQENIRVRRAGFAYRAEFSKMIQRFYLLSPATSYAGDYIWTGDDRSGCERILTDAKIKKEEWQMGVTKAFIKNPETLFYLEGERDRYWHTMASRIQRAWRAYVRRKHEAATKIQRFWRNQREALVYERKRDYGHQVLAGKKERRRFSLLGMRKFMGDYLDIAGGSAQGEMLRNAATISPAEQVHFSSRAELLVSKLGRSSKLSPRFLIITDKAVYFVVSQARDGRVSTSLERKIPLVTIKAISMTNLRDDFVALNVNACEEGDPIFTCVFKTEMITVILTLTGGNMSVNIGPTIDYAKKKDKRAVIKTQKNEAVRGDATYKSHTIQVGSGEPPNSLSNPMPPRKPKVKKAAKTASSSRPVNSGRPAAVALPGATKPAAPPALSSMPSHTPVVTKPTAIPTAAIGAARAPPSIPGRAAAPPPPPPPPPPAGPPKEFYKALYNFTGQEGEMNLVKGEEVEVKEKDDNGWWMVVKNGQEGWAPSNYLKKVEQAPPPPPPPPPPSRPVAARPPAASSAPTAPAVTNGSAVPSWKAKNAASATPSADSTPPTSRPASSASKVPPAIKAKPSIPAKPAIPAKPQVGAKPAPAIGGKPPVPTAPKVQPKAASKLGQVAQPAKAPGQLDLAAAFAKRAARAQQEED.

Residues 1–28 (MAPSKKAGKKGAVGGFLSGASKPQKVQK) are disordered. Residues 41–721 (AGVPDMTLLS…TLFYLEGERD (681 aa)) enclose the Myosin motor domain. 134–141 (GESGAGKT) contributes to the ATP binding site. A Phosphoserine modification is found at Ser-363. The segment at 410 to 492 (VIGVLDIYGF…AGIFATLNDA (83 aa)) is actin-binding. IQ domains lie at 725 to 745 (HTMA…KHEA) and 746 to 771 (ATKI…YGHQ). A TH1 domain is found at 779–969 (RRRFSLLGMR…TIQVGSGEPP (191 aa)). 3 disordered regions span residues 951–1029 (RGDA…PVVT), 1042–1071 (ARAP…PKEF), and 1116–1248 (PSNY…QVAQ). Residues 957–974 (KSHTIQVGSGEPPNSLSN) are compositionally biased toward polar residues. Residues 1042-1053 (ARAPPSIPGRAA) are compositionally biased toward low complexity. Composition is skewed to pro residues over residues 1054–1067 (APPP…PAGP) and 1126–1138 (APPP…PPSR). Residues 1067 to 1125 (PPKEFYKALYNFTGQEGEMNLVKGEEVEVKEKDDNGWWMVVKNGQEGWAPSNYLKKVEQ) form the SH3 domain. 2 stretches are compositionally biased toward low complexity: residues 1139–1157 (PVAA…PAVT) and 1170–1226 (AASA…IGGK).

The protein belongs to the TRAFAC class myosin-kinesin ATPase superfamily. Myosin family. Post-translationally, phosphorylation of the TEDS site (Ser-363) is required for the polarization of the actin cytoskeleton. Phosphorylation probably activates the myosin-I ATPase activity.

It localises to the cytoplasm. It is found in the cytoskeleton. The protein resides in the actin patch. Type-I myosin implicated in the organization of the actin cytoskeleton. Required for proper actin cytoskeleton polarization. At the cell cortex, assembles in patch-like structures together with proteins from the actin-polymerizing machinery and promotes actin assembly. Functions as actin nucleation-promoting factor (NPF) for the Arp2/3 complex. The sequence is that of Myosin-1 (MYO1) from Cryptococcus neoformans var. neoformans serotype D (strain B-3501A) (Filobasidiella neoformans).